The primary structure comprises 537 residues: Tegument protein BRRF2 (537 aa).

Disordered stretches follow at residues 325–474 (LALP…EAQD) and 486–537 (GLRV…LSVI). The span at 334-347 (KPQQTCSQLTSRGN) shows a compositional bias: polar residues. Residues 423-441 (SSQAAPSSSSVAPVASLSG) show a composition bias toward low complexity. Residues 492–517 (DEDEDGSEDGEFSDLDLSDSDHEGDE) show a composition bias toward acidic residues.

Belongs to the lymphocryptovirus BRRF2 family.

Its subcellular location is the virion tegument. The protein is Tegument protein BRRF2 of Homo sapiens (Human).